The primary structure comprises 503 residues: Zinc metalloproteinase nas-14 (503 aa).

The signal sequence occupies residues methionine 1–proline 25. One can recognise a Peptidase M12A domain in the interval asparagine 116 to glycine 312. Intrachain disulfides connect cysteine 158-cysteine 311 and cysteine 182-cysteine 202. Asparagine 192 carries an N-linked (GlcNAc...) asparagine glycan. Position 210 (histidine 210) interacts with Zn(2+). Residue glutamate 211 is part of the active site. Histidine 214 and histidine 220 together coordinate Zn(2+). Over residues threonine 317–threonine 340 the composition is skewed to low complexity. Positions threonine 317 to asparagine 377 are disordered. A compositionally biased stretch (basic and acidic residues) spans valine 342–valine 351. Low complexity predominate over residues serine 352–lysine 370. 3 disulfides stabilise this stretch: cysteine 380–cysteine 414, cysteine 387–cysteine 407, and cysteine 396–cysteine 411. One can recognise a ShKT 1 domain in the interval cysteine 380–cysteine 414. Residues threonine 422–alanine 464 are disordered. N-linked (GlcNAc...) asparagine glycosylation occurs at asparagine 437. Residues serine 439–alanine 464 are compositionally biased toward low complexity. Cystine bridges form between cysteine 469-cysteine 503, cysteine 476-cysteine 496, and cysteine 485-cysteine 500. The 35-residue stretch at cysteine 469–cysteine 503 folds into the ShKT 2 domain.

Zn(2+) is required as a cofactor. Expressed in pharyngeal muscles and mc cells.

The protein localises to the secreted. Its function is as follows. Metalloprotease. This Caenorhabditis elegans protein is Zinc metalloproteinase nas-14 (nas-14).